The sequence spans 1210 residues: Adenine-specific methyltransferase PglX (1210 aa).

A compositionally biased stretch (basic and acidic residues) spans Lys1181 to Gly1194. Residues Lys1181 to Gln1210 form a disordered region. Basic residues predominate over residues Thr1201–Gln1210.

Belongs to the methyltransferase superfamily. PglX adenine methyltransferase family.

It catalyses the reaction a 2'-deoxyadenosine in DNA + S-adenosyl-L-methionine = an N(6)-methyl-2'-deoxyadenosine in DNA + S-adenosyl-L-homocysteine + H(+). BREX systems (bacteriophage exclusion) provide immunity against bacteriophage. Part of a type 2 BREX system. Probably a DNA methyltransferase, it methylates phage DNA in vitro in an S-adenosyl-L-methionine-dependent manner. Previously called the phage growth limitation (Pgl) system, it confers protection against bacteriophage phiC31. The bacteria allows one cycle of phage infection, but subsequent cycles are impaired, protecting the original bacterial colony. The system undergoes high rates (10(-3) to 10(-4)) of phase reversion, i.e. loss and regain of phiC31 resistance. When the pglW-pglX-pglY-pglZ genes are transformed into a susceptible S.lividans (strain 1326) they confer resistance to infection by phage phiC31 and phiBT1; all 4 genes are necessary. Functionally, probably a toxic component of a type II toxin-antitoxin (TA) system. The toxic activity is inhibited by its cognate antitoxin PglZ. Its function is as follows. May be a subtypes G and alpha restriction enzyme that recognizes and cleaves an unknown sequence. Methylates an adenine residue in the same sequence. The polypeptide is Adenine-specific methyltransferase PglX (Streptomyces coelicolor (strain ATCC BAA-471 / A3(2) / M145)).